We begin with the raw amino-acid sequence, 205 residues long: Pyridoxal 5'-phosphate synthase subunit PdxT (205 aa).

Position 52–54 (52–54 (GES)) interacts with L-glutamine. C84 (nucleophile) is an active-site residue. L-glutamine contacts are provided by residues R116 and 145 to 146 (IR). Catalysis depends on charge relay system residues H185 and E187.

The protein belongs to the glutaminase PdxT/SNO family. As to quaternary structure, in the presence of PdxS, forms a dodecamer of heterodimers. Only shows activity in the heterodimer.

The enzyme catalyses aldehydo-D-ribose 5-phosphate + D-glyceraldehyde 3-phosphate + L-glutamine = pyridoxal 5'-phosphate + L-glutamate + phosphate + 3 H2O + H(+). It carries out the reaction L-glutamine + H2O = L-glutamate + NH4(+). The protein operates within cofactor biosynthesis; pyridoxal 5'-phosphate biosynthesis. In terms of biological role, catalyzes the hydrolysis of glutamine to glutamate and ammonia as part of the biosynthesis of pyridoxal 5'-phosphate. The resulting ammonia molecule is channeled to the active site of PdxS. The sequence is that of Pyridoxal 5'-phosphate synthase subunit PdxT from Staphylothermus marinus (strain ATCC 43588 / DSM 3639 / JCM 9404 / F1).